A 196-amino-acid polypeptide reads, in one-letter code: ATP-dependent Clp protease proteolytic subunit (196 aa).

Catalysis depends on serine 101, which acts as the Nucleophile. Histidine 126 is an active-site residue.

Belongs to the peptidase S14 family. As to quaternary structure, component of the chloroplastic Clp protease core complex.

The protein localises to the plastid. The protein resides in the chloroplast stroma. The enzyme catalyses Hydrolysis of proteins to small peptides in the presence of ATP and magnesium. alpha-casein is the usual test substrate. In the absence of ATP, only oligopeptides shorter than five residues are hydrolyzed (such as succinyl-Leu-Tyr-|-NHMec, and Leu-Tyr-Leu-|-Tyr-Trp, in which cleavage of the -Tyr-|-Leu- and -Tyr-|-Trp bonds also occurs).. Cleaves peptides in various proteins in a process that requires ATP hydrolysis. Has a chymotrypsin-like activity. Plays a major role in the degradation of misfolded proteins. This chain is ATP-dependent Clp protease proteolytic subunit, found in Arabis hirsuta (Hairy rock-cress).